The chain runs to 135 residues: Thyrostimulin beta-5 subunit (135 aa).

An N-terminal signal peptide occupies residues 1–19; that stretch reads MVMPLVLSLALTPPPLCHA. 5 disulfide bridges follow: Cys-30/Cys-87, Cys-54/Cys-102, Cys-63/Cys-118, Cys-67/Cys-120, and Cys-123/Cys-130.

The protein belongs to the glycoprotein hormones subunit beta family. In terms of assembly, heterodimer with GPHA2; non-covalently-linked. In terms of tissue distribution, expressed by the venom duct.

It localises to the secreted. The polypeptide is Thyrostimulin beta-5 subunit (Conus victoriae (Queen Victoria cone)).